Here is a 97-residue protein sequence, read N- to C-terminus: UPF0213 protein YE0453 (97 aa).

The region spanning 4-79 (SLWHLYLLRT…KQLSKQQKEK (76 aa)) is the GIY-YIG domain.

Belongs to the UPF0213 family.

The polypeptide is UPF0213 protein YE0453 (Yersinia enterocolitica serotype O:8 / biotype 1B (strain NCTC 13174 / 8081)).